The following is a 363-amino-acid chain: Aminomethyltransferase (363 aa).

It belongs to the GcvT family. The glycine cleavage system is composed of four proteins: P, T, L and H.

The enzyme catalyses N(6)-[(R)-S(8)-aminomethyldihydrolipoyl]-L-lysyl-[protein] + (6S)-5,6,7,8-tetrahydrofolate = N(6)-[(R)-dihydrolipoyl]-L-lysyl-[protein] + (6R)-5,10-methylene-5,6,7,8-tetrahydrofolate + NH4(+). The glycine cleavage system catalyzes the degradation of glycine. This chain is Aminomethyltransferase, found in Thioalkalivibrio sulfidiphilus (strain HL-EbGR7).